Reading from the N-terminus, the 887-residue chain is Microsomal triglyceride transfer protein large subunit (887 aa).

The first 11 residues, 1 to 11 (FLCFISSYSAS), serve as a signal peptide directing secretion. A Vitellogenin domain is found at 21–655 (LNNDRLYKLT…YIEKTPLHGI (635 aa)). A disulfide bridge links C167 with C187.

Heterodimer; heterodimerizes with the protein disulfide isomerase (P4HB/PDI). Interacts with APOB. Interacts with PRAP1.

Its subcellular location is the endoplasmic reticulum. The protein resides in the golgi apparatus. The enzyme catalyses a 1,2-diacyl-sn-glycero-3-phosphocholine(in) = a 1,2-diacyl-sn-glycero-3-phosphocholine(out). The catalysed reaction is a 1,2-diacyl-sn-glycero-3-phosphoethanolamine(in) = a 1,2-diacyl-sn-glycero-3-phosphoethanolamine(out). It carries out the reaction a cholesterol ester(in) = a cholesterol ester(out). It catalyses the reaction a triacyl-sn-glycerol(in) = a triacyl-sn-glycerol(out). Catalyzes the transport of triglyceride, cholesteryl ester, and phospholipid between phospholipid surfaces. Required for the assembly and secretion of plasma lipoproteins that contain apolipoprotein B. May be involved in regulating cholesteryl ester biosynthesis in cells that produce lipoproteins. The polypeptide is Microsomal triglyceride transfer protein large subunit (MTTP) (Bos taurus (Bovine)).